Here is a 359-residue protein sequence, read N- to C-terminus: DNA polymerase IV (359 aa).

A UmuC domain is found at 4-185 (IIHIDMDCYF…LSLRKIPGVG (182 aa)). Asp8 and Asp103 together coordinate Mg(2+). Residue Glu104 is part of the active site.

It belongs to the DNA polymerase type-Y family. In terms of assembly, monomer. The cofactor is Mg(2+).

It is found in the cytoplasm. The enzyme catalyses DNA(n) + a 2'-deoxyribonucleoside 5'-triphosphate = DNA(n+1) + diphosphate. Poorly processive, error-prone DNA polymerase involved in untargeted mutagenesis. Copies undamaged DNA at stalled replication forks, which arise in vivo from mismatched or misaligned primer ends. These misaligned primers can be extended by PolIV. Exhibits no 3'-5' exonuclease (proofreading) activity. May be involved in translesional synthesis, in conjunction with the beta clamp from PolIII. This is DNA polymerase IV from Shewanella sp. (strain ANA-3).